Here is a 422-residue protein sequence, read N- to C-terminus: Probable glycosidase CRR1 (422 aa).

The signal sequence occupies residues 1-20 (MRISILQLVPVVGYIGFALG). A GH16 domain is found at 67–339 (DEESCAPIPA…WENSPDIIEK (273 aa)). E217 acts as the Nucleophile in catalysis. Residue E221 is the Proton donor of the active site.

It belongs to the glycosyl hydrolase 16 family. CRR1 subfamily.

The protein resides in the spore wall. In terms of biological role, spore specific glycosidase involved in spore wall assembly during sporulation. May be involved in copper import. This Saccharomyces cerevisiae (strain ATCC 204508 / S288c) (Baker's yeast) protein is Probable glycosidase CRR1 (CRR1).